The chain runs to 447 residues: tRNA-2-methylthio-N(6)-dimethylallyladenosine synthase (447 aa).

Positions 1-116 constitute an MTTase N-terminal domain; that stretch reads MYIRTFGCQM…LPDLIKRRRA (116 aa). [4Fe-4S] cluster contacts are provided by Cys8, Cys45, Cys79, Cys153, Cys157, and Cys160. The Radical SAM core domain maps to 139-372; the sequence is RVDGATAFVS…QALINQQAAA (234 aa). One can recognise a TRAM domain in the interval 375–438; that stretch reads QGMIGTRQRV…TNSLRGRVAG (64 aa).

Belongs to the methylthiotransferase family. MiaB subfamily. Monomer. It depends on [4Fe-4S] cluster as a cofactor.

It is found in the cytoplasm. It catalyses the reaction N(6)-dimethylallyladenosine(37) in tRNA + (sulfur carrier)-SH + AH2 + 2 S-adenosyl-L-methionine = 2-methylsulfanyl-N(6)-dimethylallyladenosine(37) in tRNA + (sulfur carrier)-H + 5'-deoxyadenosine + L-methionine + A + S-adenosyl-L-homocysteine + 2 H(+). In terms of biological role, catalyzes the methylthiolation of N6-(dimethylallyl)adenosine (i(6)A), leading to the formation of 2-methylthio-N6-(dimethylallyl)adenosine (ms(2)i(6)A) at position 37 in tRNAs that read codons beginning with uridine. The polypeptide is tRNA-2-methylthio-N(6)-dimethylallyladenosine synthase (Bordetella pertussis (strain Tohama I / ATCC BAA-589 / NCTC 13251)).